The chain runs to 275 residues: Testis-specific gene 13 protein (275 aa).

A compositionally biased stretch (polar residues) spans 1–20 (MSQKRQTKFQNGKSKTSENS). The segment at 1–28 (MSQKRQTKFQNGKSKTSENSSAKREKGM) is disordered.

As to expression, testis-specific.

In Homo sapiens (Human), this protein is Testis-specific gene 13 protein (TSGA13).